A 494-amino-acid chain; its full sequence is Aspartyl/glutamyl-tRNA(Asn/Gln) amidotransferase subunit B (494 aa).

It belongs to the GatB/GatE family. GatB subfamily. As to quaternary structure, heterotrimer of A, B and C subunits.

The enzyme catalyses L-glutamyl-tRNA(Gln) + L-glutamine + ATP + H2O = L-glutaminyl-tRNA(Gln) + L-glutamate + ADP + phosphate + H(+). It carries out the reaction L-aspartyl-tRNA(Asn) + L-glutamine + ATP + H2O = L-asparaginyl-tRNA(Asn) + L-glutamate + ADP + phosphate + 2 H(+). In terms of biological role, allows the formation of correctly charged Asn-tRNA(Asn) or Gln-tRNA(Gln) through the transamidation of misacylated Asp-tRNA(Asn) or Glu-tRNA(Gln) in organisms which lack either or both of asparaginyl-tRNA or glutaminyl-tRNA synthetases. The reaction takes place in the presence of glutamine and ATP through an activated phospho-Asp-tRNA(Asn) or phospho-Glu-tRNA(Gln). The chain is Aspartyl/glutamyl-tRNA(Asn/Gln) amidotransferase subunit B from Trichodesmium erythraeum (strain IMS101).